A 324-amino-acid chain; its full sequence is Phosphate transport system permease protein PstC (324 aa).

The next 6 helical transmembrane spans lie at 29-49 (LLLTAAVAFVLIALVSAALSM), 87-107 (IVTALIAMLIAVPVSFGIAFF), 126-146 (LLAGIPSIIYGMWGLFVLVPV), 173-193 (PLGIGTLSAGFVLAIMVIPFI), 235-255 (VIGGMFLGLGRALGETMAVAF), and 291-311 (SALLLLGFVLFIVTFAVLVIA). Residues 83-311 (IYGTIVTALI…IVTFAVLVIA (229 aa)) enclose the ABC transmembrane type-1 domain.

It belongs to the binding-protein-dependent transport system permease family. CysTW subfamily.

Its subcellular location is the cell inner membrane. In terms of biological role, part of a binding-protein-dependent transport system for phosphate; probably responsible for the translocation of the substrate across the membrane. This chain is Phosphate transport system permease protein PstC (pstC), found in Xylella fastidiosa (strain 9a5c).